The following is a 1095-amino-acid chain: MTKKYEFDWIIPVPPELTTGCVFDRWFENEKETKENDFERDALFKVDEYGFFLYWKSEGRDGDVIELCQVSDIRAGGTPKDPKILDKVTKKNGTNIPELDKRSLTICSNTDYINITYHHVICPDAATAKSWQKNLRLITHNNRATNVCPRVNLMKHWMRLSYCVEKSGKIPVKTLAKTFASGKTEKLVYTCIKDAGLPDDKNATMTKEQFTFDKFYALYHKVCPRNDIEELFTSITKGKQDFISLEQFIQFMNDKQRDPRMNEILYPLYEEKRCTEIINDYELDEEKKKNVQMSLDGFKRYLMSDENAPVFLDRLDFYMEMDQPLAHYYINSSHNTYLSGRQIGGKSSVEMYRQTLLAGCRCVELDCWNGKGEDEEPIVTHGHAYCTEILFKDCIQAIADCAFVSSEYPVILSFENHCNRAQQYKLAKYCDDFFGDLLLKEPLPDHPLDPGLPLPPPCKLKRKILIKNKRMKPEVEKVELELWLKGELKTDDDPEEDASAGKPPEAAAAPAPAPEAAAAAEGAAEGGGGAEAEAAAANYSGSTTNVHPWLSSMVNYAQPIKFQGFDKAIEKNIAHNMSSFAESAGMNYLKQSSIDFVNYNKRQMSRIYPKGTRADSSNYMPQVFWNAGCQMVSLNFQSSDLPMQLNQGKFEYNGGCGYLLKPDFMRRADKDFDPFADAPVDGVIAAQCSVKVIAGQFLSDKKVGTYVEVDMFGLPSDTVKKEFRTRLVANNGLNPVYNEDPFVFRKVVLPDLAVLRFGVYEESGKILGQRILPLDGLQAGYRHVSLRTEANFPMSLPMLFVNIELKIYVPDGFEDFMAMLSDPRGFAGAAKQQNEQMKALGIEEQSGGAARDAGKAKEEEKKEPPLVFEPVTLESLRQEKGFQKVGKKQIKELDTLRKKHAKERTSVQKTQNAAIDKLIKGKSKDDIRNDANIKNSINDQTKQWTDMIARHRKEEWDMLRQHVQDSQDAMKALMLTVQAAQIKQLEDRHARDIKDLNAKQAKMSADTAKEVQNDKTLKTKNEKDRRLREKRQNNVKRFMEEKKQIGVKQGRAMEKLKLAHSKQIEEFSTDVQKLMDMYKIEEEAYKTQGKTEFYA.

The PI-PLC X-box domain occupies 319 to 469; sequence MEMDQPLAHY…LKRKILIKNK (151 aa). Catalysis depends on residues His334 and His381. The substrate site is built by Lys467 and Lys469. The disordered stretch occupies residues 487-529; sequence ELKTDDDPEEDASAGKPPEAAAAPAPAPEAAAAAEGAAEGGGG. A compositionally biased stretch (low complexity) spans 500–523; that stretch reads AGKPPEAAAAPAPAPEAAAAAEGA. Residues 550-666 form the PI-PLC Y-box domain; it reads LSSMVNYAQP…GYLLKPDFMR (117 aa). Positions 579 and 606 each coordinate substrate. The C2 domain occupies 666–794; that stretch reads RRADKDFDPF…SLRTEANFPM (129 aa). 2 disordered regions span residues 842–863 and 1000–1030; these read IEEQ…EKKE and QAKM…LREK. Composition is skewed to basic and acidic residues over residues 852 to 863 and 1007 to 1030; these read DAGKAKEEEKKE and TAKE…LREK.

As to quaternary structure, interacts with inaD. In terms of tissue distribution, abundantly expressed in the adult retina.

The catalysed reaction is a 1,2-diacyl-sn-glycero-3-phospho-(1D-myo-inositol-4,5-bisphosphate) + H2O = 1D-myo-inositol 1,4,5-trisphosphate + a 1,2-diacyl-sn-glycerol + H(+). Functionally, the production of the second messenger molecules diacylglycerol (DAG) and inositol 1,4,5-trisphosphate (IP3) is mediated by activated phosphatidylinositol-specific phospholipase C enzymes. Essential component of the phototransduction pathway. Essential downstream component of a hh-signaling pathway which regulates the Duox-dependent gut immune response to bacterial uracil; required for the activation of Cad99C and consequently Cad99C-dependent endosome formation, which is essential for the Duox-dependent production of reactive oxygen species (ROS) in response to intestinal bacterial infection. This is 1-phosphatidylinositol 4,5-bisphosphate phosphodiesterase from Drosophila melanogaster (Fruit fly).